The sequence spans 520 residues: GMP synthase [glutamine-hydrolyzing] (520 aa).

A Glutamine amidotransferase type-1 domain is found at 9-202 (TILIIDFGSQ…VHRIVGVKPG (194 aa)). Residue cysteine 86 is the Nucleophile of the active site. Residues histidine 176 and glutamate 178 contribute to the active site. In terms of domain architecture, GMPS ATP-PPase spans 203 to 395 (WTMGAYREQA…LGLPDSFIGR (193 aa)). 230 to 236 (SGGVDSS) is an ATP binding site.

In terms of assembly, homodimer.

The catalysed reaction is XMP + L-glutamine + ATP + H2O = GMP + L-glutamate + AMP + diphosphate + 2 H(+). Its pathway is purine metabolism; GMP biosynthesis; GMP from XMP (L-Gln route): step 1/1. Functionally, catalyzes the synthesis of GMP from XMP. The polypeptide is GMP synthase [glutamine-hydrolyzing] (Brucella abortus (strain S19)).